Here is a 164-residue protein sequence, read N- to C-terminus: S-ribosylhomocysteine lyase (164 aa).

Positions 54, 58, and 128 each coordinate Fe cation.

The protein belongs to the LuxS family. As to quaternary structure, homodimer. The cofactor is Fe cation.

The catalysed reaction is S-(5-deoxy-D-ribos-5-yl)-L-homocysteine = (S)-4,5-dihydroxypentane-2,3-dione + L-homocysteine. Its function is as follows. Involved in the synthesis of autoinducer 2 (AI-2) which is secreted by bacteria and is used to communicate both the cell density and the metabolic potential of the environment. The regulation of gene expression in response to changes in cell density is called quorum sensing. Catalyzes the transformation of S-ribosylhomocysteine (RHC) to homocysteine (HC) and 4,5-dihydroxy-2,3-pentadione (DPD). The protein is S-ribosylhomocysteine lyase of Campylobacter hominis (strain ATCC BAA-381 / DSM 21671 / CCUG 45161 / LMG 19568 / NCTC 13146 / CH001A).